The primary structure comprises 193 residues: dCTP deaminase (193 aa).

Residues 110 to 115 (RSSLAR), Asp-128, 136 to 138 (VLE), Tyr-171, Lys-178, and Gln-182 each bind dCTP. Glu-138 (proton donor/acceptor) is an active-site residue. A disordered region spans residues 169–193 (RPYNRRQDAKYRDQQGAVASRIDKD).

Belongs to the dCTP deaminase family. As to quaternary structure, homotrimer.

The enzyme catalyses dCTP + H2O + H(+) = dUTP + NH4(+). It functions in the pathway pyrimidine metabolism; dUMP biosynthesis; dUMP from dCTP (dUTP route): step 1/2. Functionally, catalyzes the deamination of dCTP to dUTP. The protein is dCTP deaminase of Citrobacter koseri (strain ATCC BAA-895 / CDC 4225-83 / SGSC4696).